The sequence spans 114 residues: Iron-sulfur cluster insertion protein ErpA (114 aa).

Iron-sulfur cluster contacts are provided by cysteine 42, cysteine 106, and cysteine 108.

The protein belongs to the HesB/IscA family. In terms of assembly, homodimer. Iron-sulfur cluster serves as cofactor.

Its function is as follows. Required for insertion of 4Fe-4S clusters for at least IspG. This Haemophilus influenzae (strain PittGG) protein is Iron-sulfur cluster insertion protein ErpA.